The chain runs to 302 residues: N-acetylmuramic acid 6-phosphate etherase (302 aa).

The 164-residue stretch at 57–220 folds into the SIS domain; that stretch reads VSEKLKNNGR…TTAVMIKLGK (164 aa). Residue Glu-85 is the Proton donor of the active site. Residue Glu-116 is part of the active site.

This sequence belongs to the GCKR-like family. MurNAc-6-P etherase subfamily. In terms of assembly, homodimer.

The enzyme catalyses N-acetyl-D-muramate 6-phosphate + H2O = N-acetyl-D-glucosamine 6-phosphate + (R)-lactate. It functions in the pathway amino-sugar metabolism; N-acetylmuramate degradation. In terms of biological role, specifically catalyzes the cleavage of the D-lactyl ether substituent of MurNAc 6-phosphate, producing GlcNAc 6-phosphate and D-lactate. The protein is N-acetylmuramic acid 6-phosphate etherase of Clostridium acetobutylicum (strain ATCC 824 / DSM 792 / JCM 1419 / IAM 19013 / LMG 5710 / NBRC 13948 / NRRL B-527 / VKM B-1787 / 2291 / W).